The chain runs to 285 residues: UPF0354 protein MW1686 (285 aa).

The protein belongs to the UPF0354 family.

The protein is UPF0354 protein MW1686 of Staphylococcus aureus (strain MW2).